A 241-amino-acid chain; its full sequence is Eukaryotic translation initiation factor 3 subunit J (241 aa).

Residues 1–27 are compositionally biased toward basic and acidic residues; the sequence is MEEDWEQHGEKEEVPLPAKKPDANKWD. The tract at residues 1-99 is disordered; that stretch reads MEEDWEQHGE…ENMTPEQKLA (99 aa). A compositionally biased stretch (acidic residues) spans 28–45; it reads GEDEEEEVKDSWEDEDEL. The stretch at 31–119 forms a coiled coil; sequence EEEEVKDSWE…ESDLKNALDT (89 aa). 2 stretches are compositionally biased toward basic and acidic residues: residues 46 to 58 and 69 to 90; these read EEKKDEEKVETPK and IVEKEKQKHEEAERRRLEKEAE.

The protein belongs to the eIF-3 subunit J family. Component of the eukaryotic translation initiation factor 3 (eIF-3) complex.

It localises to the cytoplasm. In terms of biological role, component of the eukaryotic translation initiation factor 3 (eIF-3) complex, which is involved in protein synthesis of a specialized repertoire of mRNAs and, together with other initiation factors, stimulates binding of mRNA and methionyl-tRNAi to the 40S ribosome. The eIF-3 complex specifically targets and initiates translation of a subset of mRNAs involved in cell proliferation. The sequence is that of Eukaryotic translation initiation factor 3 subunit J from Culex quinquefasciatus (Southern house mosquito).